The primary structure comprises 428 residues: MNSTALEPTLEFARKLDQEDPLRHFRDEFYLPPNSIYMDGNSLGLLSKRAEKTLFTILQDWKLLGIDGWTKGTYPWFDLSEKIGAMLAPLVGASPEEVIATGSTTVNLHQLVSTFYQPEGKRTKILADELTFPSDIYALQSQLRIHGYDPSTHLIRVKSRDGRFLEEEDIIAAMSEDVALVVLPTVLYRSGQILDIQLLTDEAHKRGILIGFDACHSIGAIPHSFSEWGVDFAFWCNYKYMNGGPGCVAGLYVHRKHFGSAPGLAGWFGSKKDKQFDMEHTFTPSLTAGAYQIGTPHLLSLAPLIGSLEIFQEAGIERIRQKSLQLTNYFMYLIEQELSHFGFIIGNPKDDVRRGGHISLEHEEAARICKSLKENGVIPDFRAPNIIRLAPIALYTSYEEVWNVVQIMKKIMQEKQYKKFSNEREVVA.

Pyridoxal 5'-phosphate-binding positions include Thr-104, Thr-105, 132-135 (FPSD), Asp-213, His-216, and Tyr-238. Lys-239 is subject to N6-(pyridoxal phosphate)lysine. Pyridoxal 5'-phosphate contacts are provided by Trp-267 and Thr-295.

It belongs to the kynureninase family. Homodimer. Pyridoxal 5'-phosphate is required as a cofactor.

It catalyses the reaction L-kynurenine + H2O = anthranilate + L-alanine + H(+). The enzyme catalyses 3-hydroxy-L-kynurenine + H2O = 3-hydroxyanthranilate + L-alanine + H(+). It functions in the pathway amino-acid degradation; L-kynurenine degradation; L-alanine and anthranilate from L-kynurenine: step 1/1. It participates in cofactor biosynthesis; NAD(+) biosynthesis; quinolinate from L-kynurenine: step 2/3. Catalyzes the cleavage of L-kynurenine (L-Kyn) and L-3-hydroxykynurenine (L-3OHKyn) into anthranilic acid (AA) and 3-hydroxyanthranilic acid (3-OHAA), respectively. The polypeptide is Kynureninase (Geobacillus thermodenitrificans (strain NG80-2)).